The sequence spans 407 residues: Putative glycosyltransferase YtcC (407 aa).

Belongs to the glycosyltransferase group 1 family. Glycosyltransferase 4 subfamily.

The protein is Putative glycosyltransferase YtcC (ytcC) of Bacillus subtilis (strain 168).